Reading from the N-terminus, the 4911-residue chain is Histone-lysine N-methyltransferase 2C (4911 aa).

The disordered stretch occupies residues 1–101 (MSSEEDKSVE…EDAEAEVDNS (101 aa)). The segment covering 12–28 (PQPPPPPPEEPGAPAPS) has biased composition (pro residues). 2 positions are modified to phosphoserine: Ser-28 and Ser-46. The a.T hook DNA-binding region spans 34-46 (KRPRGRPRKDGAS). Positions 50 to 59 (RARKKPRSRG) are enriched in basic residues. The segment covering 64-81 (EDEDSMDGLETTETETIV) has biased composition (acidic residues). Phosphoserine is present on Ser-89. Positions 92-112 (EDAEAEVDNSKQLIPTLQRSV) form a coiled coil. Residue Ser-113 is modified to Phosphoserine. A disordered region spans residues 164–203 (RNQPSNKKDIDDNSNGTYEKMQNSAPRKQRGQRKERSPQQ). The span at 176–189 (NSNGTYEKMQNSAP) shows a compositional bias: polar residues. Ser-200 is subject to Phosphoserine. The C2HC pre-PHD-type 1; degenerate zinc finger occupies 227-262 (ELSLVGLPDAIDIQALFDSTGTCWAHHRCVEWSLGV). 4 consecutive PHD-type zinc fingers follow at residues 283–331 (ERCA…PEHI), 341–391 (DANC…CKVC), 388–438 (CKVC…CRIC), and 464–520 (DNLC…CKHL). The segment at 344-389 (CAVCDSPGDLLDQFFCTTCGQHYHGMCLDIAVTPLKRAGWQCPECK) adopts an RING-type zinc-finger fold. Positions 436–489 (RICIECGTRSSSQWHHNCLICDNCYQQQDNLCPFCGKCYHPELQKDMLHCNMCK) constitute a DHHC domain. Positions 644 to 672 (EDKMEVTENIEVVTHQITVQQEQLQLLEE) form a coiled coil. Residues 721-730 (QGEKEQKENS) show a composition bias toward basic and acidic residues. The tract at residues 721–742 (QGEKEQKENSELSTGLMDSEMT) is disordered. Lys-758 is subject to N6-acetyllysine. Positions 763 to 791 (SSETESSFSSSADISKADVSSSPTPSSDL) are enriched in low complexity. Disordered stretches follow at residues 763 to 798 (SSET…DMLH), 828 to 864 (PAIT…DISE), and 885 to 912 (GRGS…RSKL). Basic residues predominate over residues 830–842 (ITKRKFSPGRPRS). The span at 845-856 (GAWSTHNTVSPP) shows a compositional bias: polar residues. Ser-854 carries the post-translational modification Phosphoserine. 3 PHD-type zinc fingers span residues 957–1010 (QDMC…CTVC), 1007–1057 (CTVC…CVWC), and 1084–1139 (LSSC…CRPY). The disordered stretch occupies residues 1215 to 1324 (AVLQTPPDIQ…LPCRDDGWSE (110 aa)). Over residues 1224-1270 (QSEHSRDGEMDDSREGELMDCDGKSESSPEREAVDDETKGVEGTDGV) the composition is skewed to basic and acidic residues. Ser-1301 carries the phosphoserine modification. The stretch at 1338–1366 (TESTEKIKKRYRKRKNKLEETFPAYLQEA) forms a coiled coil. The span at 1406–1416 (PSLDPLLSSSS) shows a compositional bias: low complexity. Disordered stretches follow at residues 1406–1431 (PSLD…DDPL) and 1458–1485 (HSDI…PLSE). Residues 1467–1482 (DPSSLPQPNVNQSSRP) show a composition bias toward polar residues. Lys-1508 carries the post-translational modification N6-acetyllysine. Disordered regions lie at residues 1604–1630 (FNPM…DTMS) and 1709–2448 (VQMS…SPVA). 2 stretches are compositionally biased toward polar residues: residues 1610-1620 (DPNNSWTSSAP) and 1709-1727 (VQMS…SIDP). Basic and acidic residues predominate over residues 1729–1753 (SRIDSELFKDPLKQRESEHEQEWKF). Residues 1754-1787 (RQQMRQKSKQQAKIEATQKLEQVKNEQQQQQQQQ) adopt a coiled-coil conformation. Residue Lys-1772 is modified to N6-acetyllysine. Residues 1788 to 1823 (FGSQHLLVQSGSDTPSSGIQSPLTPQPGNGNMSPAQ) are compositionally biased toward polar residues. A compositionally biased stretch (pro residues) spans 1851–1860 (QAPPPPPAPS). Positions 1861-1875 (RIPIQDSLSQAQTSQ) are enriched in low complexity. Residues 1927-1945 (TPLSSVSRPLQMNETTANR) show a composition bias toward polar residues. Phosphoserine is present on Ser-1987. N6-acetyllysine is present on Lys-2009. Composition is skewed to polar residues over residues 2054–2065 (QDPYGSVSQASR), 2085–2094 (FSHNQSNDPY), 2115–2131 (AFSQ…QDPY), and 2144–2159 (SYSQ…TDPY). Low complexity predominate over residues 2173–2187 (PYSQQPQTPRPSTQT). Composition is skewed to polar residues over residues 2302-2319 (SPMT…SQTA), 2335-2353 (CASS…SGVS), and 2362-2375 (SGVT…NMAQ). The span at 2377-2389 (DTEKLRQRQKLRE) shows a compositional bias: basic and acidic residues. The span at 2390–2399 (IILQQQQQKK) shows a compositional bias: low complexity. An asymmetric dimethylarginine mark is found at Arg-2454 and Arg-2571. Disordered stretches follow at residues 2589 to 2694 (RHGN…SDDP), 2793 to 2887 (EPKK…RETA), 2925 to 2954 (EKSD…VSSL), and 2989 to 3029 (VNPG…SGPQ). Composition is skewed to polar residues over residues 2629-2645 (PPSQ…SSMV) and 2661-2682 (PLST…TQPS). Residues 2793-2811 (EPKKKEQENKTLVLSDKHS) are compositionally biased toward basic and acidic residues. N6-acetyllysine is present on residues Lys-2802 and Lys-2809. Polar residues predominate over residues 2814–2832 (KKSTVTNEVKTEVLSPNSK). Ser-2828 carries the post-translational modification Phosphoserine. Lys-2832 is modified (N6-acetyllysine). Over residues 2833-2849 (VESKCETEKNDENKDNV) the composition is skewed to basic and acidic residues. Polar residues predominate over residues 2851–2860 (TPCSQASAHS). Positions 2861–2884 (DLNDGEKTSLHPCDPDLFEKRTNR) are enriched in basic and acidic residues. An N6-acetyllysine modification is found at Lys-2867. The segment covering 3011 to 3029 (TQTGPQTSQSGTSSMSGPQ) has biased composition (low complexity). Coiled coils occupy residues 3054–3081 (LLQD…QRSE), 3173–3272 (NDSQ…QQQQ), and 3391–3433 (FSES…EMEQ). The span at 3205-3221 (HRKSKKALSAKQRTAKK) shows a compositional bias: basic residues. Disordered regions lie at residues 3205 to 3241 (HRKS…TEQQ), 3353 to 3409 (PPIA…EQQE), 3527 to 3583 (PNFS…HSYP), 3596 to 3919 (IIPE…MANG), and 4024 to 4053 (VKEE…SRRN). Basic and acidic residues-rich tracts occupy residues 3222 to 3238 (AGRE…KHVT) and 3395 to 3409 (FQER…EQQE). Composition is skewed to polar residues over residues 3527–3549 (PNFS…QSPV), 3564–3583 (ANSS…HSYP), 3637–3658 (ISET…QADQ), and 3684–3701 (LPNS…TYAN). Basic and acidic residues predominate over residues 3703-3725 (EVDKLSMETPAKTEEIKLEKAET). The residue at position 3714 (Lys-3714) is an N6-acetyllysine. At Ser-3758 the chain carries Phosphoserine. Basic and acidic residues predominate over residues 3803-3812 (DCTKDNKLVE). Over residues 3878 to 3892 (MYSSTDTFTHLKQQN) the composition is skewed to polar residues. Residues 3897 to 3911 (PPTPPASLPPTPPPM) show a composition bias toward pro residues. Ser-4034 is modified (phosphoserine). An Asymmetric dimethylarginine modification is found at Arg-4139. Residue Ser-4267 is modified to Phosphoserine. The segment at 4399-4439 (YRKCCFCHEEGDGLTDGPARLLNLDLDLWVHLNCALWSTEV) adopts a C2HC pre-PHD-type 2 zinc-finger fold. The PHD-type 8 zinc-finger motif lies at 4460–4507 (MKCVFCHKTGATSGCHRFRCTNIYHFTCAIKAQCMFFKDKTMLCPMHK). Residues 4545 to 4605 (DHTFRVGSLI…CRYLCSIEEK (61 aa)) enclose the FYR N-terminal domain. An FYR C-terminal domain is found at 4606-4691 (DGRPVFVIRI…EACENYTFRY (86 aa)). Residues 4707–4712 (GCARSE) carry the WDR5 interaction motif (WIN) motif. The SET domain occupies 4771 to 4887 (SNVYLARSRI…KGEELCYDYK (117 aa)). Residues Tyr-4825 and 4848 to 4849 (NH) contribute to the S-adenosyl-L-methionine site. Residues Cys-4851, Cys-4899, Cys-4901, and Cys-4906 each contribute to the Zn(2+) site. The region spanning 4895 to 4911 (HKIPCHCGAVNCRKWMN) is the Post-SET domain.

Belongs to the class V-like SAM-binding methyltransferase superfamily. Histone-lysine methyltransferase family. TRX/MLL subfamily. In terms of assembly, component of the MLL3 complex (also named ASCOM complex), at least composed of catalytic subunit KMT2C/MLL3, ASH2L, RBBP5, WDR5, NCOA6, DPY30, KDM6A, PAXIP1/PTIP, PAGR1 and alpha- and beta-tubulin. Forms a core complex with the evolutionary conserved subcomplex WRAD composed of WDR5, RBBP5, ASH2L/ASH2 and DPY30 subunits; WRAD differentially stimulates the methyltransferase activity. Interacts (via WIN motif) with WDR5. As to expression, highly expressed in testis and ovary, followed by brain and liver. Also expressed in placenta, peripherical blood, fetal thymus, heart, lung and kidney. Within brain, expression was highest in hippocampus, caudate nucleus, and substantia nigra. Not detected in skeletal muscle and fetal liver.

The protein resides in the nucleus. The enzyme catalyses L-lysyl(4)-[histone H3] + S-adenosyl-L-methionine = N(6)-methyl-L-lysyl(4)-[histone H3] + S-adenosyl-L-homocysteine + H(+). Histone methyltransferase that catalyzes methyl group transfer from S-adenosyl-L-methionine to the epsilon-amino group of 'Lys-4' of histone H3 (H3K4). Part of chromatin remodeling machinery predominantly forms H3K4me1 methylation marks at active chromatin sites where transcription and DNA repair take place. Likely plays a redundant role with KMT2D in enriching H3K4me1 mark on primed and active enhancer elements. The polypeptide is Histone-lysine N-methyltransferase 2C (KMT2C) (Homo sapiens (Human)).